We begin with the raw amino-acid sequence, 160 residues long: Ribosomal RNA large subunit methyltransferase H (160 aa).

Positions 76 and 108 each coordinate S-adenosyl-L-methionine.

This sequence belongs to the RNA methyltransferase RlmH family. In terms of assembly, homodimer.

It localises to the cytoplasm. It carries out the reaction pseudouridine(1915) in 23S rRNA + S-adenosyl-L-methionine = N(3)-methylpseudouridine(1915) in 23S rRNA + S-adenosyl-L-homocysteine + H(+). Its function is as follows. Specifically methylates the pseudouridine at position 1915 (m3Psi1915) in 23S rRNA. The chain is Ribosomal RNA large subunit methyltransferase H from Nitrobacter winogradskyi (strain ATCC 25391 / DSM 10237 / CIP 104748 / NCIMB 11846 / Nb-255).